Here is a 180-residue protein sequence, read N- to C-terminus: Large ribosomal subunit protein uL6 (180 aa).

This sequence belongs to the universal ribosomal protein uL6 family. As to quaternary structure, part of the 50S ribosomal subunit.

Functionally, this protein binds to the 23S rRNA, and is important in its secondary structure. It is located near the subunit interface in the base of the L7/L12 stalk, and near the tRNA binding site of the peptidyltransferase center. This is Large ribosomal subunit protein uL6 from Clostridium botulinum (strain Loch Maree / Type A3).